We begin with the raw amino-acid sequence, 261 residues long: Aminoglycoside N(3)-acetyltransferase IV (261 aa).

It belongs to the antibiotic N-acetyltransferase family.

The enzyme catalyses a 2-deoxystreptamine antibiotic + acetyl-CoA = an N(3)-acetyl-2-deoxystreptamine antibiotic + CoA + H(+). Its function is as follows. Resistance to antibiotics containing the 2-deoxy-streptamine ring including gentamicin, kanamycin, tobramycin, neomycin and apramycin. The polypeptide is Aminoglycoside N(3)-acetyltransferase IV (aacC4) (Salmonella sp).